A 256-amino-acid chain; its full sequence is Diacetyl reductase [(S)-acetoin forming] (256 aa).

NAD(+)-binding positions include L6–D33 and D59. Residue S139 coordinates substrate. The active-site Proton acceptor is the Y152. Residue K156 participates in NAD(+) binding.

It belongs to the short-chain dehydrogenases/reductases (SDR) family. Homotetramer.

The catalysed reaction is (S)-acetoin + NAD(+) = diacetyl + NADH + H(+). In terms of biological role, catalyzes the reversible reduction of (S)-acetoin to 2,3-butanediol in the presence of NADH. In Klebsiella pneumoniae, this protein is Diacetyl reductase [(S)-acetoin forming] (budC).